The primary structure comprises 639 residues: Serine/threonine-protein kinase PAK mbt (639 aa).

One can recognise a CRIB domain in the interval 11–24 (ISMPSNFEHRVHTG). Residues 25–367 (FDKRENKYVG…VVSAGDPREN (343 aa)) are linker. Disordered stretches follow at residues 79–195 (HHNN…SLLY) and 222–345 (RSNL…QDQR). Low complexity-rich tracts occupy residues 91–129 (NSSS…ETGG), 138–159 (VARS…ANVP), 227–241 (PPSG…QTSP), and 274–295 (QQQQ…NPLH). A compositionally biased stretch (basic residues) spans 296–308 (PHAHPHPHHHQHL). The segment covering 309 to 331 (AKSASRASSSSGGASSAAQQASG) has biased composition (low complexity). The 252-residue stretch at 368 to 619 (LDHFNKIGEG…AAELLAHPFL (252 aa)) folds into the Protein kinase domain. ATP contacts are provided by residues 374–382 (IGEGSTGTV) and K397. D487 serves as the catalytic Proton acceptor. S521 is subject to Phosphoserine. Residue T525 is modified to Phosphothreonine.

It belongs to the protein kinase superfamily. STE Ser/Thr protein kinase family. STE20 subfamily. As to quaternary structure, interacts tightly with GTP-bound but not GDP-bound Cdc42 and weakly with Rac1. Mg(2+) is required as a cofactor. Post-translationally, autophosphorylated when activated by Cdc42. As to expression, expressed in adult brain and eye. High levels detected in developing photoreceptor cells and future bristle cells, and lower levels in cone and pigment cells, as detected in third instar eye imaginal disks (at protein level).

Its subcellular location is the cell junction. It is found in the adherens junction. The protein localises to the cell membrane. The catalysed reaction is L-seryl-[protein] + ATP = O-phospho-L-seryl-[protein] + ADP + H(+). The enzyme catalyses L-threonyl-[protein] + ATP = O-phospho-L-threonyl-[protein] + ADP + H(+). Involved in neurogenesis of the adult central nervous system, and together with Cdc42, regulates photoreceptor cell morphogenesis. Phosphorylates exogenous substrates when activated by Cdc42. In Drosophila melanogaster (Fruit fly), this protein is Serine/threonine-protein kinase PAK mbt.